The sequence spans 667 residues: Probable Na(+)/H(+) antiporter nhx-9 (667 aa).

The next 8 helical transmembrane spans lie at 41 to 61 (VYVITVWLLIASLAKILFNLM), 73 to 93 (LLIIVGLALGWILHQTSLSGA), 97 to 117 (SHTFFLYLLPPIIFDAGYFMP), 128 to 148 (VLVFSVFGTIWNTFAIGGSLL), 165 to 185 (ILVFSALISAVDPVAVIAVFE), 192 to 212 (FLFINVFGEALFNDGVTVVLY), 236 to 256 (LSFFVVALGGAAVGIIFAIAA), and 268 to 288 (ILAPVFIFVLPYMAYLTAEMV). Asn310 is a glycosylation site (N-linked (GlcNAc...) asparagine). 4 consecutive transmembrane segments (helical) span residues 325–345 (MLAQSSETVIFMFLGLSTISS), 351–371 (LYFICATLFFCLIYRAIGIVV), 390–410 (FIMSYGGLRGAIAYGLVVSIP), and 418–438 (MFITATIAVIYFTVFLQGITI). Residues 637-667 (TEQLPSETPFHSGRRQSTGDLNATRRADFNV) are disordered. Position 644 is a phosphothreonine (Thr644).

This sequence belongs to the monovalent cation:proton antiporter 1 (CPA1) transporter (TC 2.A.36) family. Post-translationally, phosphorylated. In terms of tissue distribution, in early stage larva, expressed in the twin excretory cell processes. At later larval stages, expression is more restricted, resulting in a 'beads on a chain' appearance.

It localises to the cell membrane. Serves some physiological function other than regulation of cellular pH. This Caenorhabditis elegans protein is Probable Na(+)/H(+) antiporter nhx-9 (nhx-9).